The chain runs to 226 residues: Calcium-binding protein 1 (226 aa).

G2 carries the N-myristoyl glycine lipid modification. The S-palmitoyl cysteine moiety is linked to residue C4. 4 EF-hand domains span residues 81–116, 135–152, 158–193, and 195–226; these read EEIEELREAFREFDKDKDGYINCRDLGNCMRTMGYM, GHVDFDDFVELMGPKLLA, IGVKELRDAFREFDTNGDGEISTSELREAMRKLLGH, and VGHRDIEEIIRDVDLNGDGRVDFEEFVRMMSR. 5 residues coordinate Ca(2+): D94, D96, D98, Y100, and D105. Ca(2+) is bound by residues D171, N173, D175, and E177. Phosphoserine is present on S179. E182, D208, N210, D212, R214, and E219 together coordinate Ca(2+).

Homodimer. Interacts (via C-terminus) with ITPR1, ITPR2 and ITPR3. This binding is calcium dependent and the interaction correlates with calcium concentration. An additional calcium-independent interaction with the N-terminus of ITPR1 results in a decreased InsP(3) binding to the receptor. Interacts with CACNA1A (via C-terminal CDB motif) in the pre- and postsynaptic membranes. Interacts with CACNA1C (via C-terminal C and IQ motifs). Interacts with CACNA1D. The binding to the C motif is calcium independent whereas the binding to IQ requires the presence of calcium and is mutually exclusive with calmodulin binding. Interacts with TRPC5 (via C-terminus). Interacts (via EF-hands 1 and 2) at microtubules with MAP1LC3B. Interacts with MYO1C. Interacts (via EF-hands 1 and 2) with NSMF (via the central NLS-containing motif region), the interaction occurs in a calcium dependent manner after synaptic NMDA receptor stimulation and prevents nuclear import of NSMF. Interacts with SPACA9. In terms of processing, phosphorylated. The phosphorylation regulates the activity.

The protein resides in the cytoplasm. The protein localises to the cytoskeleton. Its subcellular location is the perinuclear region. It is found in the cell membrane. It localises to the golgi apparatus. The protein resides in the postsynaptic density. In terms of biological role, modulates calcium-dependent activity of inositol 1,4,5-triphosphate receptors (ITPRs). Inhibits agonist-induced intracellular calcium signaling. Enhances inactivation and does not support calcium-dependent facilitation of voltage-dependent P/Q-type calcium channels. Causes calcium-dependent facilitation and inhibits inactivation of L-type calcium channels by binding to the same sites as calmodulin in the C-terminal domain of CACNA1C, but has an opposite effect on channel function. Suppresses the calcium-dependent inactivation of CACNA1D. Inhibits TRPC5 channels. Prevents NMDA receptor-induced cellular degeneration. Required for the normal transfer of light signals through the retina. The sequence is that of Calcium-binding protein 1 (CABP1) from Bos taurus (Bovine).